Consider the following 92-residue polypeptide: MKTLLLTLVVVTIVCLDLGYTRRCFTTPSVRSERCPPGQEVCYTKTWTDGHGGSRGKRVDLGCAATCPTPKKKDIKIICCSTDNCNTFPKWP.

Positions 1–21 are cleaved as a signal peptide; it reads MKTLLLTLVVVTIVCLDLGYT. Intrachain disulfides connect cysteine 24–cysteine 42, cysteine 35–cysteine 63, cysteine 67–cysteine 79, and cysteine 80–cysteine 85.

It belongs to the three-finger toxin family. Long-chain subfamily. Type II alpha-neurotoxin sub-subfamily. Expressed by the venom gland.

The protein resides in the secreted. Binds with high affinity to muscular (alpha-1/CHRNA1) and neuronal (alpha-7/CHRNA7) nicotinic acetylcholine receptor (nAChR) and inhibits acetylcholine from binding to the receptor, thereby impairing neuromuscular and neuronal transmission. This chain is Long neurotoxin 1, found in Oxyuranus scutellatus scutellatus (Australian taipan).